We begin with the raw amino-acid sequence, 78 residues long: Large ribosomal subunit protein bL28 (78 aa).

Positions 1 to 25 are disordered; the sequence is MARVCQVTGKRPMSGHHVSHANNKT. Basic residues predominate over residues 13-25; that stretch reads MSGHHVSHANNKT.

This sequence belongs to the bacterial ribosomal protein bL28 family.

This chain is Large ribosomal subunit protein bL28, found in Nitrosomonas eutropha (strain DSM 101675 / C91 / Nm57).